The primary structure comprises 561 residues: ATP-dependent RNA helicase MRH4, mitochondrial (561 aa).

The N-terminal 26 residues, 1–26 (MSLFFKPVISPQWSFPVLLKIGVRSY), are a transit peptide targeting the mitochondrion. The tract at residues 29–72 (GPRTKHKGNSPLASVPTGSSNKNRKQKAKGKKGNKKNDPDQAFN) is disordered. The span at 50–62 (KNRKQKAKGKKGN) shows a compositional bias: basic residues. Residues 98–129 (SNFDQLLILPPVRDAVKEIISKESLKLQDSRK) carry the Q motif motif. In terms of domain architecture, Helicase ATP-binding spans 131 to 319 (TSENIIPSPI…NINHLIFCSA (189 aa)). Residue 144–151 (AIKRISKN) participates in ATP binding. The DEAD box signature appears at 267 to 270 (SIRM). Positions 350 to 539 (ALDFKVINSA…KQGGRVFMLT (190 aa)) constitute a Helicase C-terminal domain.

Belongs to the DEAD box helicase family. MRH4 subfamily.

It is found in the mitochondrion. It catalyses the reaction ATP + H2O = ADP + phosphate + H(+). In terms of biological role, ATP-binding RNA helicase involved in mitochondrial RNA metabolism. Required for maintenance of mitochondrial DNA. The sequence is that of ATP-dependent RNA helicase MRH4, mitochondrial (MRH4) from Saccharomyces cerevisiae (strain YJM789) (Baker's yeast).